Here is a 354-residue protein sequence, read N- to C-terminus: Glutamine synthetase (354 aa).

The region spanning Ile-22–Gly-101 is the GS beta-grasp domain. Positions Phe-108–Ala-354 constitute a GS catalytic domain.

It belongs to the glutamine synthetase family. As to quaternary structure, homooctamer.

The protein resides in the cytoplasm. It carries out the reaction L-glutamate + NH4(+) + ATP = L-glutamine + ADP + phosphate + H(+). This chain is Glutamine synthetase (GLN1), found in Hebeloma cylindrosporum.